Here is a 249-residue protein sequence, read N- to C-terminus: Tryptophan synthase alpha chain (249 aa).

Residues E43 and D54 each act as proton acceptor in the active site.

This sequence belongs to the TrpA family. In terms of assembly, tetramer of two alpha and two beta chains.

It carries out the reaction (1S,2R)-1-C-(indol-3-yl)glycerol 3-phosphate + L-serine = D-glyceraldehyde 3-phosphate + L-tryptophan + H2O. Its pathway is amino-acid biosynthesis; L-tryptophan biosynthesis; L-tryptophan from chorismate: step 5/5. Functionally, the alpha subunit is responsible for the aldol cleavage of indoleglycerol phosphate to indole and glyceraldehyde 3-phosphate. The protein is Tryptophan synthase alpha chain of Campylobacter jejuni subsp. jejuni serotype O:6 (strain 81116 / NCTC 11828).